Reading from the N-terminus, the 675-residue chain is Heat shock 70 kDa protein, mitochondrial (675 aa).

The N-terminal 51 residues, 1–51, are a transit peptide targeting the mitochondrion; the sequence is MAAVLRSLRRRDVASATFSAYRSLTGSTKPAYVAQKWSCLARPFSSRPAGN. Positions 638–675 are disordered; sequence VSKIGEHMSGGSSGGSSAGGSQGGGDQAPEAEYEEVKK. A compositionally biased stretch (gly residues) spans 648 to 663; it reads GSSGGSSAGGSQGGGD. Acidic residues predominate over residues 666-675; the sequence is PEAEYEEVKK.

This sequence belongs to the heat shock protein 70 family.

Its subcellular location is the mitochondrion. The chain is Heat shock 70 kDa protein, mitochondrial from Phaseolus vulgaris (Kidney bean).